The primary structure comprises 262 residues: ATP synthase subunit a (262 aa).

6 consecutive transmembrane segments (helical) span residues 32-52 (IAFT…AVFV), 98-118 (LFMF…VLGI), 127-147 (FTIT…VGFW), 153-173 (FFSL…IFPI), 189-209 (LFVA…FVID), and 219-239 (LLVG…EILV).

The protein belongs to the ATPase A chain family. F-type ATPases have 2 components, CF(1) - the catalytic core - and CF(0) - the membrane proton channel. CF(1) has five subunits: alpha(3), beta(3), gamma(1), delta(1), epsilon(1). CF(0) has four main subunits: a, b, b' and c.

The protein localises to the cell inner membrane. Its function is as follows. Key component of the proton channel; it plays a direct role in the translocation of protons across the membrane. This Erythrobacter litoralis (strain HTCC2594) protein is ATP synthase subunit a.